Here is a 38-residue protein sequence, read N- to C-terminus: Potassium channel toxin alpha-KTx 6.4 (38 aa).

4 disulfides stabilise this stretch: Cys-6–Cys-27, Cys-12–Cys-32, Cys-16–Cys-34, and Cys-22–Cys-37.

This sequence belongs to the short scorpion toxin superfamily. Potassium channel inhibitor family. Alpha-KTx 06 subfamily. Expressed by the venom gland.

The protein resides in the secreted. Functionally, potently, completely and reversibly blocks voltage-gated potassium channel Kv1.2/KCNA2 and Shaker B (Sh). Also blocks small conductance (SK) calcium-activated potassium channel (KCNN). The protein is Potassium channel toxin alpha-KTx 6.4 of Pandinus imperator (Emperor scorpion).